The sequence spans 1405 residues: DNA-directed RNA polymerase subunit beta' (1405 aa).

Positions 70, 72, 85, and 88 each coordinate Zn(2+). Residues Asp-460, Asp-462, and Asp-464 each contribute to the Mg(2+) site. Residues Cys-815, Cys-890, Cys-897, and Cys-900 each coordinate Zn(2+).

This sequence belongs to the RNA polymerase beta' chain family. In terms of assembly, the RNAP catalytic core consists of 2 alpha, 1 beta, 1 beta' and 1 omega subunit. When a sigma factor is associated with the core the holoenzyme is formed, which can initiate transcription. The cofactor is Mg(2+). Zn(2+) serves as cofactor.

The catalysed reaction is RNA(n) + a ribonucleoside 5'-triphosphate = RNA(n+1) + diphosphate. Its function is as follows. DNA-dependent RNA polymerase catalyzes the transcription of DNA into RNA using the four ribonucleoside triphosphates as substrates. In Xanthomonas campestris pv. campestris (strain B100), this protein is DNA-directed RNA polymerase subunit beta'.